Here is a 257-residue protein sequence, read N- to C-terminus: Nopaline permease ATP-binding protein P (257 aa).

Residues 8–253 (LVAEDVHKNF…PTSPRCRAFL (246 aa)) form the ABC transporter domain. ATP is bound at residue 40–47 (GSSGSGKS).

This sequence belongs to the ABC transporter superfamily.

Its subcellular location is the cell inner membrane. Component of the nopaline active transport system probably consisting of four subunits: Q, M, P and T. This system is also capable of transporting octopine provided that catabolic functions are induced with nopaline. The sequence is that of Nopaline permease ATP-binding protein P (nocP) from Agrobacterium fabrum (strain C58 / ATCC 33970) (Agrobacterium tumefaciens (strain C58)).